Here is a 286-residue protein sequence, read N- to C-terminus: 4-diphosphocytidyl-2-C-methyl-D-erythritol kinase (286 aa).

The active site involves Lys10. 100–110 contacts ATP; the sequence is PMGSGLGGGSS. Asp142 is an active-site residue.

It belongs to the GHMP kinase family. IspE subfamily. In terms of assembly, homodimer.

It carries out the reaction 4-CDP-2-C-methyl-D-erythritol + ATP = 4-CDP-2-C-methyl-D-erythritol 2-phosphate + ADP + H(+). Its pathway is isoprenoid biosynthesis; isopentenyl diphosphate biosynthesis via DXP pathway; isopentenyl diphosphate from 1-deoxy-D-xylulose 5-phosphate: step 3/6. Functionally, catalyzes the phosphorylation of the position 2 hydroxy group of 4-diphosphocytidyl-2C-methyl-D-erythritol. This Buchnera aphidicola subsp. Acyrthosiphon pisum (strain APS) (Acyrthosiphon pisum symbiotic bacterium) protein is 4-diphosphocytidyl-2-C-methyl-D-erythritol kinase.